Here is a 327-residue protein sequence, read N- to C-terminus: MLIAHRPTLIEKKVSDIRSRFIIEPLEPGFGYTLGNSLRRTLLSSIPGAAVTSINIQGVMHEFSTIPGVKEDVTEIVLNVKRLVISSEIDEPFTVRLYKTGEGEVLAKDIEVPTGIEIGNGDLVIATLAKDAVFDMQLTIERGRGYVSAEQNRNDGMSLAGHIPVDSIYSPVHKVTYRVEATRAGERTDFDRLIIDVETKPSILPRDAVASAGKTLCELFGLARELNSQAEGVEFGVDSMIPESDEDLRIPIEDLGLSVRSYNCLKREGVNYVSELLGFSEQELLDIRNFGQKSADEVQEKLAELGHSLKGSVPGFDGSYFDPNYGS.

The alpha N-terminal domain (alpha-NTD) stretch occupies residues 1-227; that stretch reads MLIAHRPTLI…ELFGLARELN (227 aa). Positions 244-327 are alpha C-terminal domain (alpha-CTD); the sequence is SDEDLRIPIE…GSYFDPNYGS (84 aa).

The protein belongs to the RNA polymerase alpha chain family. As to quaternary structure, homodimer. The RNAP catalytic core consists of 2 alpha, 1 beta, 1 beta' and 1 omega subunit. When a sigma factor is associated with the core the holoenzyme is formed, which can initiate transcription.

It catalyses the reaction RNA(n) + a ribonucleoside 5'-triphosphate = RNA(n+1) + diphosphate. DNA-dependent RNA polymerase catalyzes the transcription of DNA into RNA using the four ribonucleoside triphosphates as substrates. The sequence is that of DNA-directed RNA polymerase subunit alpha from Tropheryma whipplei (strain TW08/27) (Whipple's bacillus).